The chain runs to 446 residues: Adenylosuccinate synthetase (446 aa).

GTP contacts are provided by residues 20-26 (GDEGKGK) and 48-50 (GHT). The active-site Proton acceptor is aspartate 21. Mg(2+) contacts are provided by aspartate 21 and glycine 48. Residues 21–24 (DEGK), 46–49 (NAGH), threonine 137, arginine 151, glutamine 232, threonine 247, and arginine 319 contribute to the IMP site. The active-site Proton donor is the histidine 49. Position 315 to 321 (315 to 321 (SVTGRPR)) interacts with substrate. GTP-binding positions include arginine 321, 347–349 (KLD), and 429–431 (STG).

It belongs to the adenylosuccinate synthetase family. In terms of assembly, homodimer. Requires Mg(2+) as cofactor.

Its subcellular location is the cytoplasm. It carries out the reaction IMP + L-aspartate + GTP = N(6)-(1,2-dicarboxyethyl)-AMP + GDP + phosphate + 2 H(+). The protein operates within purine metabolism; AMP biosynthesis via de novo pathway; AMP from IMP: step 1/2. Functionally, plays an important role in the de novo pathway of purine nucleotide biosynthesis. Catalyzes the first committed step in the biosynthesis of AMP from IMP. This chain is Adenylosuccinate synthetase, found in Polynucleobacter necessarius subsp. necessarius (strain STIR1).